A 301-amino-acid chain; its full sequence is E3 ubiquitin-protein ligase DIS1 (301 aa).

The RING-type; degenerate zinc finger occupies 53–89 (CPVCLSAMYPPIHQCSNGHTLCSGCKPRVHNRCPTCR). The SIAH-type; degenerate zinc finger occupies 106 to 166 (SLELPCKYQN…LVNHLKDDHK (61 aa)).

This sequence belongs to the SINA (Seven in absentia) family. Homodimer. Interacts with NEK6. Interacts with SKIPA.

The protein resides in the nucleus. The protein localises to the cytoplasm. The catalysed reaction is S-ubiquitinyl-[E2 ubiquitin-conjugating enzyme]-L-cysteine + [acceptor protein]-L-lysine = [E2 ubiquitin-conjugating enzyme]-L-cysteine + N(6)-ubiquitinyl-[acceptor protein]-L-lysine.. It functions in the pathway protein modification; protein ubiquitination. E3 ubiquitin-protein ligase that mediates ubiquitination and subsequent proteasomal degradation of target proteins. E3 ubiquitin ligases accept ubiquitin from an E2 ubiquitin-conjugating enzyme in the form of a thioester and then directly transfers the ubiquitin to targeted substrates. Plays a negative role in drought stress tolerance through transcriptional and post-translational regulation of diverse stress-related genes. Interacts with the serine/threonine-protein kinase NEK6 and promotes its degradation via the 26S proteasome-dependent pathway. This Oryza sativa subsp. japonica (Rice) protein is E3 ubiquitin-protein ligase DIS1.